The chain runs to 194 residues: Cysteine and glycine-rich protein 3 (194 aa).

Residues 1–5 (MPNWG) are interaction with TCAP. One can recognise an LIM zinc-binding 1 domain in the interval 10 to 61 (CGACEKTVYHAEEIQCNGRSFHKTCFHCMACRKALDSTTVAAHESEIYCKVC). The Nuclear localization signal motif lies at 64 to 69 (RRYGPK). The interaction with CLF2 and isoform 2 stretch occupies residues 94–105 (QSPKPARSVTTS). Phosphoserine is present on residues S95 and S153. One can recognise an LIM zinc-binding 2 domain in the interval 120-171 (CPRCGKSVYAAEKVMGGGKPWHKTCFRCAICGKSLESTNVTDKDGELYCKVC).

Self-associates. Oligomeric in the cytoplasm and monomeric in the nucleus. Homooligomers preferentially form along the actin cytoskeleton. Isoform 2 interacts with isoform 1. Isoform 1 but not isoform 2 interacts with MYOD1 and MYOG. Isoform 1 interacts with TCAP, ACTN2 and NRAP. Isoform 2 interacts with TCAP and alpha-actinin. Interacts with LDHD. Interacts (via N-terminus)with GLRX3 (via C-terminus) and PPP3CA; GLRX3 and calcineurin compete for interaction with CSRP3. Interacts with MYF6. Interacts with CFL2; the stoichiometry influences F-actin depolymerization and possibly two molecules of CFL2 can interact with one molecule of CSRP3 resulting in the highest functional impact; the interaction is stronger with phosphorylated CFL2. Post-translationally, phosphorylated by PKC/PRKCA. In terms of tissue distribution, cardiac and slow-twitch skeletal muscles. Isoform 2 is expressed in striated muscle. Isoform 2 is specifically expressed at higher levels in patients with neuromuscular diseases, such as limb-girdle muscular dystrophy 2A (LGMD2A), Duchenne muscular dystrophy (DMD) and dermatomyositis.

Its subcellular location is the nucleus. It is found in the cytoplasm. It localises to the cytoskeleton. The protein resides in the myofibril. The protein localises to the sarcomere. Its subcellular location is the z line. In terms of biological role, positive regulator of myogenesis. Acts as a cofactor for myogenic bHLH transcription factors such as MYOD1, and probably MYOG and MYF6. Enhances the DNA-binding activity of the MYOD1:TCF3 isoform E47 complex and may promote formation of a functional MYOD1:TCF3 isoform E47:MEF2A complex involved in myogenesis. Plays a crucial and specific role in the organization of cytosolic structures in cardiomyocytes. Could play a role in mechanical stretch sensing. May be a scaffold protein that promotes the assembly of interacting proteins at Z-line structures. It is essential for calcineurin anchorage to the Z line. Required for stress-induced calcineurin-NFAT activation. The role in regulation of cytoskeleton dynamics by association with CFL2 is reported conflictingly: Shown to enhance CFL2-mediated F-actin depolymerization dependent on the CSRP3:CFL2 molecular ratio, and also shown to reduce the ability of CLF1 and CFL2 to enhance actin depolymerization. Proposed to contribute to the maintenance of muscle cell integrity through an actin-based mechanism. Can directly bind to actin filaments, cross-link actin filaments into bundles without polarity selectivity and protect them from dilution- and cofilin-mediated depolymerization; the function seems to involve its self-association. In vitro can inhibit PKC/PRKCA activity. Proposed to be involved in cardiac stress signaling by down-regulating excessive PKC/PRKCA signaling. Its function is as follows. May play a role in early sarcomere organization. Overexpression in myotubes negatively regulates myotube differentiation. By association with isoform 1 and thus changing the CSRP3 isoform 1:CFL2 stoichiometry is proposed to down-regulate CFL2-mediated F-actin depolymerization. The polypeptide is Cysteine and glycine-rich protein 3 (CSRP3) (Homo sapiens (Human)).